Consider the following 357-residue polypeptide: Probable cinnamyl alcohol dehydrogenase (357 aa).

Position 47 (cysteine 47) interacts with Zn(2+). Serine 49 is a binding site for NADP(+). Positions 69, 70, 100, 103, 106, 114, and 163 each coordinate Zn(2+). Residues threonine 167, 188-193 (GLGGVG), 211-216 (SSSDKK), threonine 251, glycine 275, and 298-300 (SFI) contribute to the NADP(+) site.

It belongs to the zinc-containing alcohol dehydrogenase family. In terms of assembly, homodimer. The cofactor is Zn(2+).

It catalyses the reaction (E)-cinnamyl alcohol + NADP(+) = (E)-cinnamaldehyde + NADPH + H(+). The enzyme catalyses (E)-coniferol + NADP(+) = (E)-coniferaldehyde + NADPH + H(+). The catalysed reaction is (E)-sinapyl alcohol + NADP(+) = (E)-sinapaldehyde + NADPH + H(+). It carries out the reaction (E)-4-coumaroyl alcohol + NADP(+) = (E)-4-coumaraldehyde + NADPH + H(+). It catalyses the reaction (E)-caffeyl alcohol + NADP(+) = (E)-caffeyl aldehyde + NADPH + H(+). It functions in the pathway aromatic compound metabolism; phenylpropanoid biosynthesis. Functionally, involved in lignin biosynthesis. Catalyzes the final step specific for the production of lignin monomers. Catalyzes the NADPH-dependent reduction of coniferaldehyde, 5-hydroxyconiferaldehyde, sinapaldehyde, 4-coumaraldehyde and caffeyl aldehyde to their respective alcohols. The chain is Probable cinnamyl alcohol dehydrogenase (CAD) from Pinus radiata (Monterey pine).